A 188-amino-acid polypeptide reads, in one-letter code: Putative manganese efflux pump MntP (188 aa).

6 helical membrane-spanning segments follow: residues 3-23 (MITLFGLALALAMDAFAVALG), 39-59 (LGWHFGLFQAMMPIIGWLAGL), 65-85 (IETYDHWVAFGLLVCVGGKMI), 104-124 (GMSLIMLSVATSIDALAVGLS), 125-145 (LAIVGISVWFPALIIGIIAGV), and 167-187 (IAGGLILIGIGLKILWEHTLG).

The protein belongs to the MntP (TC 9.B.29) family.

Its subcellular location is the cell inner membrane. In terms of biological role, probably functions as a manganese efflux pump. This is Putative manganese efflux pump MntP from Syntrophotalea carbinolica (strain DSM 2380 / NBRC 103641 / GraBd1) (Pelobacter carbinolicus).